We begin with the raw amino-acid sequence, 181 residues long: MSNKAVANRYAVALFELAEEKGQTDVFERELELVQEVFETTPQLETVLAQPGLAADKKQALLRDAFQAHLSPAVMNTINLLMERGRYSEIVGLAGEYKQLNDDKKGIAEATVFSVKALSDSEKNQIAAVFAPKAGKRELRVVNVVDSALIGGLKVRVGDRVFDGSIQGQLKRLEKQLVAGQ.

This sequence belongs to the ATPase delta chain family. As to quaternary structure, F-type ATPases have 2 components, F(1) - the catalytic core - and F(0) - the membrane proton channel. F(1) has five subunits: alpha(3), beta(3), gamma(1), delta(1), epsilon(1). F(0) has three main subunits: a(1), b(2) and c(10-14). The alpha and beta chains form an alternating ring which encloses part of the gamma chain. F(1) is attached to F(0) by a central stalk formed by the gamma and epsilon chains, while a peripheral stalk is formed by the delta and b chains.

The protein resides in the cell membrane. Its function is as follows. F(1)F(0) ATP synthase produces ATP from ADP in the presence of a proton or sodium gradient. F-type ATPases consist of two structural domains, F(1) containing the extramembraneous catalytic core and F(0) containing the membrane proton channel, linked together by a central stalk and a peripheral stalk. During catalysis, ATP synthesis in the catalytic domain of F(1) is coupled via a rotary mechanism of the central stalk subunits to proton translocation. In terms of biological role, this protein is part of the stalk that links CF(0) to CF(1). It either transmits conformational changes from CF(0) to CF(1) or is implicated in proton conduction. The protein is ATP synthase subunit delta of Shouchella clausii (strain KSM-K16) (Alkalihalobacillus clausii).